We begin with the raw amino-acid sequence, 386 residues long: Protein RecA (386 aa).

Glycine 76–threonine 83 provides a ligand contact to ATP. The interval phenylalanine 362 to asparagine 386 is disordered.

This sequence belongs to the RecA family.

The protein resides in the cytoplasm. Can catalyze the hydrolysis of ATP in the presence of single-stranded DNA, the ATP-dependent uptake of single-stranded DNA by duplex DNA, and the ATP-dependent hybridization of homologous single-stranded DNAs. It interacts with LexA causing its activation and leading to its autocatalytic cleavage. This chain is Protein RecA, found in Corynebacterium efficiens (strain DSM 44549 / YS-314 / AJ 12310 / JCM 11189 / NBRC 100395).